Consider the following 320-residue polypeptide: Acetyl-coenzyme A carboxylase carboxyl transferase subunit alpha (320 aa).

One can recognise a CoA carboxyltransferase C-terminal domain in the interval 42 to 295 (IEEKALAALT…GDAIAKSFAD (254 aa)).

The protein belongs to the AccA family. In terms of assembly, acetyl-CoA carboxylase is a heterohexamer composed of biotin carboxyl carrier protein (AccB), biotin carboxylase (AccC) and two subunits each of ACCase subunit alpha (AccA) and ACCase subunit beta (AccD).

The protein localises to the cytoplasm. It carries out the reaction N(6)-carboxybiotinyl-L-lysyl-[protein] + acetyl-CoA = N(6)-biotinyl-L-lysyl-[protein] + malonyl-CoA. The protein operates within lipid metabolism; malonyl-CoA biosynthesis; malonyl-CoA from acetyl-CoA: step 1/1. Component of the acetyl coenzyme A carboxylase (ACC) complex. First, biotin carboxylase catalyzes the carboxylation of biotin on its carrier protein (BCCP) and then the CO(2) group is transferred by the carboxyltransferase to acetyl-CoA to form malonyl-CoA. This chain is Acetyl-coenzyme A carboxylase carboxyl transferase subunit alpha, found in Rhodopseudomonas palustris (strain BisA53).